The following is a 158-amino-acid chain: 2-C-methyl-D-erythritol 2,4-cyclodiphosphate synthase (158 aa).

2 residues coordinate a divalent metal cation: Asp-9 and His-11. 4-CDP-2-C-methyl-D-erythritol 2-phosphate contacts are provided by residues 9–11 (DVH) and 35–36 (HS). His-43 contacts a divalent metal cation. 4-CDP-2-C-methyl-D-erythritol 2-phosphate contacts are provided by residues 57–59 (DIG), 62–66 (FPDTD), 101–107 (AQKPKMA), 133–136 (TTTE), Phe-140, and Arg-143.

Belongs to the IspF family. In terms of assembly, homotrimer. It depends on a divalent metal cation as a cofactor.

The catalysed reaction is 4-CDP-2-C-methyl-D-erythritol 2-phosphate = 2-C-methyl-D-erythritol 2,4-cyclic diphosphate + CMP. Its pathway is isoprenoid biosynthesis; isopentenyl diphosphate biosynthesis via DXP pathway; isopentenyl diphosphate from 1-deoxy-D-xylulose 5-phosphate: step 4/6. Its function is as follows. Involved in the biosynthesis of isopentenyl diphosphate (IPP) and dimethylallyl diphosphate (DMAPP), two major building blocks of isoprenoid compounds. Catalyzes the conversion of 4-diphosphocytidyl-2-C-methyl-D-erythritol 2-phosphate (CDP-ME2P) to 2-C-methyl-D-erythritol 2,4-cyclodiphosphate (ME-CPP) with a corresponding release of cytidine 5-monophosphate (CMP). This chain is 2-C-methyl-D-erythritol 2,4-cyclodiphosphate synthase, found in Bacillus cereus (strain B4264).